The primary structure comprises 423 residues: Tegument protein UL43 (423 aa).

Positions 1-12 (MEKTPAETTAVS) are enriched in polar residues. The segment at 1–46 (MEKTPAETTAVSAGNVPRDSIPCITNVSADTRGRTRPSRPATVPQR) is disordered.

This sequence belongs to the herpesviridae US22 family.

Its subcellular location is the virion tegument. This chain is Tegument protein UL43 (UL43), found in Homo sapiens (Human).